Reading from the N-terminus, the 201-residue chain is Inosine triphosphate pyrophosphatase (201 aa).

16-21 (TGNAKK) is a binding site for ITP. Position 44 (E44) interacts with Mg(2+). ITP-binding positions include K56, 72–73 (DT), K89, 148–151 (FGWD), K171, and 176–177 (HR).

Belongs to the HAM1 NTPase family. In terms of assembly, homodimer. Mg(2+) serves as cofactor. Mn(2+) is required as a cofactor.

The protein localises to the cytoplasm. It carries out the reaction ITP + H2O = IMP + diphosphate + H(+). It catalyses the reaction dITP + H2O = dIMP + diphosphate + H(+). The enzyme catalyses XTP + H2O = XMP + diphosphate + H(+). In terms of biological role, pyrophosphatase that hydrolyzes non-canonical purine nucleotides such as inosine triphosphate (ITP), deoxyinosine triphosphate (dITP) or xanthosine 5'-triphosphate (XTP) to their respective monophosphate derivatives. The enzyme does not distinguish between the deoxy- and ribose forms. Probably excludes non-canonical purines from RNA and DNA precursor pools, thus preventing their incorporation into RNA and DNA and avoiding chromosomal lesions. In Sorghum bicolor (Sorghum), this protein is Inosine triphosphate pyrophosphatase.